Consider the following 218-residue polypeptide: Ropporin-1-like protein (218 aa).

The RIIa domain maps to 17–54 (PALPNMLKQFTKAAIRTQPRDVLQWAADYFSALSKGQD). Residues 199 to 218 (QSQGGMVQPSNFTSLHTAEK) are disordered.

The protein belongs to the ropporin family. In terms of assembly, component of axonemal radial spoke complexes.

The protein localises to the cell projection. The protein resides in the cilium. Its subcellular location is the flagellum. In terms of biological role, functions as part of axonemal radial spoke complexes that play an important part in the motility of sperm and cilia. Important for male fertility. Involved in fibrous sheath integrity and sperm motility, plays a role in PKA-dependent signaling processes required for spermatozoa capacitation. The polypeptide is Ropporin-1-like protein (ropn1l) (Danio rerio (Zebrafish)).